A 456-amino-acid polypeptide reads, in one-letter code: Phosphomannomutase (456 aa).

The active-site Phosphoserine intermediate is Ser98. 4 residues coordinate Mg(2+): Ser98, Asp246, Asp248, and Asp250.

It belongs to the phosphohexose mutase family. Mg(2+) is required as a cofactor.

The catalysed reaction is alpha-D-mannose 1-phosphate = D-mannose 6-phosphate. Its pathway is nucleotide-sugar biosynthesis; GDP-alpha-D-mannose biosynthesis; alpha-D-mannose 1-phosphate from D-fructose 6-phosphate: step 2/2. It participates in bacterial outer membrane biogenesis; LPS O-antigen biosynthesis. In terms of biological role, involved in GDP-mannose biosynthesis which serves as the activated sugar nucleotide precursor for mannose residues in cell surface polysaccharides. This enzyme participates in synthesis of the LPS O9 antigen. The sequence is that of Phosphomannomutase (manB) from Escherichia coli.